The sequence spans 307 residues: MIILSGGTGTPKLLDGLKEILPLEELTVVVNTAEDLWVSGNLISPDLDTVLYLFSDQIDRKKWWGIENDTFRTYERMHELGIEESMKLGDRDRATHIIRSNLIRGGTSLTEATVKLASLFGIDANILPMSDDPVSTYVETLQGVMHFQDFWVGKHGDPDVLGVDIRGVSEASVAKKVLEAFEKDDNVLIGPSNPITSIGPIISLPGMRELLKRKKVIAVSPIIGNAPVSGPAGKLMQACGLEVSSMGVAEYYQEFLDVFVFDERDRADEFAFERLGCRASRADTLMTSTEKSRELAEFVVGLFDTVC.

2 residues coordinate 7,8-didemethyl-8-hydroxy-5-deazariboflavin: aspartate 48 and lysine 87.

Belongs to the CofD family. In terms of assembly, homodimer. Mg(2+) serves as cofactor.

The catalysed reaction is (2S)-lactyl-2-diphospho-5'-guanosine + 7,8-didemethyl-8-hydroxy-5-deazariboflavin = oxidized coenzyme F420-0 + GMP + H(+). Its pathway is cofactor biosynthesis; coenzyme F420 biosynthesis. In terms of biological role, catalyzes the transfer of the 2-phospholactate moiety from (2S)-lactyl-2-diphospho-5'-guanosine to 7,8-didemethyl-8-hydroxy-5-deazariboflavin (FO) with the formation of oxidized coenzyme F420-0 and GMP. This Methanosarcina acetivorans (strain ATCC 35395 / DSM 2834 / JCM 12185 / C2A) protein is 2-phospho-L-lactate transferase.